The sequence spans 299 residues: UDP-N-acetylenolpyruvoylglucosamine reductase (299 aa).

Positions 28-193 constitute an FAD-binding PCMH-type domain; it reads KVGGPADILA…LSAKFELQAG (166 aa). Residue R172 is part of the active site. S222 functions as the Proton donor in the catalytic mechanism. The active site involves E292.

This sequence belongs to the MurB family. The cofactor is FAD.

It localises to the cytoplasm. It catalyses the reaction UDP-N-acetyl-alpha-D-muramate + NADP(+) = UDP-N-acetyl-3-O-(1-carboxyvinyl)-alpha-D-glucosamine + NADPH + H(+). It functions in the pathway cell wall biogenesis; peptidoglycan biosynthesis. In terms of biological role, cell wall formation. The protein is UDP-N-acetylenolpyruvoylglucosamine reductase of Lactococcus lactis subsp. cremoris (strain SK11).